Here is a 344-residue protein sequence, read N- to C-terminus: tRNA N6-adenosine threonylcarbamoyltransferase (344 aa).

Positions 111 and 115 each coordinate Fe cation. Substrate-binding positions include 133-137 (VVSGG), Asp-166, Gly-179, Asp-183, and Asn-270. Position 298 (Asp-298) interacts with Fe cation.

It belongs to the KAE1 / TsaD family. Requires Fe(2+) as cofactor.

The protein localises to the cytoplasm. The catalysed reaction is L-threonylcarbamoyladenylate + adenosine(37) in tRNA = N(6)-L-threonylcarbamoyladenosine(37) in tRNA + AMP + H(+). In terms of biological role, required for the formation of a threonylcarbamoyl group on adenosine at position 37 (t(6)A37) in tRNAs that read codons beginning with adenine. Is involved in the transfer of the threonylcarbamoyl moiety of threonylcarbamoyl-AMP (TC-AMP) to the N6 group of A37, together with TsaE and TsaB. TsaD likely plays a direct catalytic role in this reaction. This Persephonella marina (strain DSM 14350 / EX-H1) protein is tRNA N6-adenosine threonylcarbamoyltransferase.